The primary structure comprises 302 residues: Probable E3 ubiquitin-protein ligase RZFP34 (302 aa).

The CHY-type zinc-finger motif lies at 54 to 130 (EGIMQYGCAH…VRQVCISCGV (77 aa)). 24 residues coordinate Zn(2+): cysteine 61, histidine 63, cysteine 74, cysteine 75, cysteine 81, cysteine 84, histidine 85, histidine 100, cysteine 112, cysteine 115, cysteine 125, cysteine 128, cysteine 137, cysteine 140, histidine 153, cysteine 154, cysteine 157, cysteine 160, histidine 170, cysteine 171, cysteine 174, cysteine 177, histidine 186, and cysteine 188. The segment at 132–196 (MGKYFCEVCK…ACVEGAMHHD (65 aa)) adopts a CTCHY-type zinc-finger fold. The RING-type; atypical zinc-finger motif lies at 197–240 (CPICFEYLFESTNDVSVLPCGHTIHVKCLREMEEHCQFACPLCS).

Its subcellular location is the nucleus. It catalyses the reaction S-ubiquitinyl-[E2 ubiquitin-conjugating enzyme]-L-cysteine + [acceptor protein]-L-lysine = [E2 ubiquitin-conjugating enzyme]-L-cysteine + N(6)-ubiquitinyl-[acceptor protein]-L-lysine.. It functions in the pathway protein modification; protein ubiquitination. Possesses transactivation activity in yeast cells. Involved in the regulation of stomatal aperture. May modulate the expression of genes that control stomata opening during heat shock or drought stress. The polypeptide is Probable E3 ubiquitin-protein ligase RZFP34 (Oryza sativa subsp. japonica (Rice)).